We begin with the raw amino-acid sequence, 111 residues long: Protein RnfH (111 aa).

Residues Arg88–Ala111 form a disordered region. Residues Lys94–Lys105 show a composition bias toward basic and acidic residues.

The protein belongs to the UPF0125 (RnfH) family.

In Cupriavidus pinatubonensis (strain JMP 134 / LMG 1197) (Cupriavidus necator (strain JMP 134)), this protein is Protein RnfH.